A 242-amino-acid polypeptide reads, in one-letter code: Trypsin-1 (242 aa).

A signal peptide spans 1-15 (MISLVFVLLIGAAFA). Residues 16-20 (TEDDK) constitute a propeptide, activation peptide. In terms of domain architecture, Peptidase S1 spans 21 to 240 (IVGGYECKAY…FNDWLTSTMA (220 aa)). 6 disulfides stabilise this stretch: Cys-27–Cys-156, Cys-45–Cys-61, Cys-129–Cys-229, Cys-136–Cys-202, Cys-167–Cys-181, and Cys-192–Cys-216. The active-site Charge relay system is His-60. The Ca(2+) site is built by Glu-72, Asn-74, Val-77, and Glu-82. Asp-104 acts as the Charge relay system in catalysis. Ser-196 functions as the Charge relay system in the catalytic mechanism.

This sequence belongs to the peptidase S1 family. It depends on Ca(2+) as a cofactor.

The protein localises to the secreted. The protein resides in the extracellular space. It carries out the reaction Preferential cleavage: Arg-|-Xaa, Lys-|-Xaa.. In Salmo salar (Atlantic salmon), this protein is Trypsin-1.